The primary structure comprises 278 residues: Dermonecrotic toxin LhSicTox-alphaIV1iii (278 aa).

The active site involves H5. The Mg(2+) site is built by E25 and D27. The Nucleophile role is filled by H41. 2 disulfides stabilise this stretch: C45–C51 and C47–C192. D85 contributes to the Mg(2+) binding site.

It belongs to the arthropod phospholipase D family. Class II subfamily. Requires Mg(2+) as cofactor. As to expression, expressed by the venom gland.

Its subcellular location is the secreted. It catalyses the reaction an N-(acyl)-sphingosylphosphocholine = an N-(acyl)-sphingosyl-1,3-cyclic phosphate + choline. The catalysed reaction is an N-(acyl)-sphingosylphosphoethanolamine = an N-(acyl)-sphingosyl-1,3-cyclic phosphate + ethanolamine. It carries out the reaction a 1-acyl-sn-glycero-3-phosphocholine = a 1-acyl-sn-glycero-2,3-cyclic phosphate + choline. The enzyme catalyses a 1-acyl-sn-glycero-3-phosphoethanolamine = a 1-acyl-sn-glycero-2,3-cyclic phosphate + ethanolamine. In terms of biological role, dermonecrotic toxins cleave the phosphodiester linkage between the phosphate and headgroup of certain phospholipids (sphingolipid and lysolipid substrates), forming an alcohol (often choline) and a cyclic phosphate. This toxin acts on sphingomyelin (SM). It may also act on ceramide phosphoethanolamine (CPE), lysophosphatidylcholine (LPC) and lysophosphatidylethanolamine (LPE), but not on lysophosphatidylserine (LPS), and lysophosphatidylglycerol (LPG). It acts by transphosphatidylation, releasing exclusively cyclic phosphate products as second products. Induces dermonecrosis, hemolysis, increased vascular permeability, edema, inflammatory response, and platelet aggregation. This is Dermonecrotic toxin LhSicTox-alphaIV1iii from Loxosceles hirsuta (Recluse spider).